Consider the following 302-residue polypeptide: Probable alpha-L-glutamate ligase (302 aa).

The ATP-grasp domain maps to 104-287; sequence MQLLSRKGIG…IAGMVFEFLE (184 aa). ATP is bound by residues lysine 141, 178–179, aspartate 187, and 211–213; these read EF and RSN. Aspartate 248, glutamate 260, and asparagine 262 together coordinate Mg(2+). The Mn(2+) site is built by aspartate 248, glutamate 260, and asparagine 262.

The protein belongs to the RimK family. Requires Mg(2+) as cofactor. Mn(2+) serves as cofactor.

This is Probable alpha-L-glutamate ligase from Psychromonas ingrahamii (strain DSM 17664 / CCUG 51855 / 37).